Consider the following 429-residue polypeptide: Phosphoribosylamine--glycine ligase (429 aa).

Positions 109-316 (KDFLARHHIP…LVELCLAACD (208 aa)) constitute an ATP-grasp domain. Residue 135-196 (LREKGAPIVV…EEFLDGEEAS (62 aa)) participates in ATP binding. The disordered stretch occupies residues 209–231 (MATSQDHKRVGENDTGLNTGGMG). Positions 286 and 288 each coordinate Mg(2+).

This sequence belongs to the GARS family. Requires Mg(2+) as cofactor. Mn(2+) serves as cofactor.

It carries out the reaction 5-phospho-beta-D-ribosylamine + glycine + ATP = N(1)-(5-phospho-beta-D-ribosyl)glycinamide + ADP + phosphate + H(+). The protein operates within purine metabolism; IMP biosynthesis via de novo pathway; N(1)-(5-phospho-D-ribosyl)glycinamide from 5-phospho-alpha-D-ribose 1-diphosphate: step 2/2. This is Phosphoribosylamine--glycine ligase from Pasteurella multocida (strain Pm70).